The following is a 260-amino-acid chain: Na(+)-translocating NADH-quinone reductase subunit C (260 aa).

Residues 12-32 traverse the membrane as a helical segment; that stretch reads LLVIILLSLACSIIVAGSAVL. Threonine 226 bears the FMN phosphoryl threonine mark.

The protein belongs to the NqrC family. Composed of six subunits; NqrA, NqrB, NqrC, NqrD, NqrE and NqrF. FMN serves as cofactor.

The protein resides in the cell inner membrane. It carries out the reaction a ubiquinone + n Na(+)(in) + NADH + H(+) = a ubiquinol + n Na(+)(out) + NAD(+). NQR complex catalyzes the reduction of ubiquinone-1 to ubiquinol by two successive reactions, coupled with the transport of Na(+) ions from the cytoplasm to the periplasm. NqrA to NqrE are probably involved in the second step, the conversion of ubisemiquinone to ubiquinol. The polypeptide is Na(+)-translocating NADH-quinone reductase subunit C (Pasteurella multocida (strain Pm70)).